A 56-amino-acid chain; its full sequence is Large ribosomal subunit protein bL32 (56 aa).

Belongs to the bacterial ribosomal protein bL32 family.

The polypeptide is Large ribosomal subunit protein bL32 (Prochlorococcus marinus (strain MIT 9215)).